Reading from the N-terminus, the 178-residue chain is MAELTTIARPYAKAAFVFAKEHDALEQWEKMLGLAAAVAGDASMRAYLDQPELDDATKVSAFAEVCGDELDESGRNFVAQLTQNKRLPLLPIILQLFHELLAEQQQFTDVEMISAFELDDAATDKLVAALKKRLGTEVNVTTSVDQSLIGGVLVRAGDTVIDGSVRGRLNRLAEQLNS.

Belongs to the ATPase delta chain family. F-type ATPases have 2 components, F(1) - the catalytic core - and F(0) - the membrane proton channel. F(1) has five subunits: alpha(3), beta(3), gamma(1), delta(1), epsilon(1). F(0) has three main subunits: a(1), b(2) and c(10-14). The alpha and beta chains form an alternating ring which encloses part of the gamma chain. F(1) is attached to F(0) by a central stalk formed by the gamma and epsilon chains, while a peripheral stalk is formed by the delta and b chains.

The protein resides in the cell inner membrane. F(1)F(0) ATP synthase produces ATP from ADP in the presence of a proton or sodium gradient. F-type ATPases consist of two structural domains, F(1) containing the extramembraneous catalytic core and F(0) containing the membrane proton channel, linked together by a central stalk and a peripheral stalk. During catalysis, ATP synthesis in the catalytic domain of F(1) is coupled via a rotary mechanism of the central stalk subunits to proton translocation. Functionally, this protein is part of the stalk that links CF(0) to CF(1). It either transmits conformational changes from CF(0) to CF(1) or is implicated in proton conduction. This chain is ATP synthase subunit delta, found in Alcanivorax borkumensis (strain ATCC 700651 / DSM 11573 / NCIMB 13689 / SK2).